A 149-amino-acid chain; its full sequence is L-alanine exporter AlaE (149 aa).

Transmembrane regions (helical) follow at residues 16-36, 46-66, 85-105, and 112-132; these read FAMV…LSGM, LVAI…RDAI, VLAY…TVGA, and AAVS…GYFL.

It belongs to the AlaE exporter family.

It localises to the cell inner membrane. Its function is as follows. Exports L-alanine. This chain is L-alanine exporter AlaE, found in Citrobacter koseri (strain ATCC BAA-895 / CDC 4225-83 / SGSC4696).